Reading from the N-terminus, the 259-residue chain is Imidazole glycerol phosphate synthase subunit HisF (259 aa).

Catalysis depends on residues aspartate 11 and aspartate 130.

This sequence belongs to the HisA/HisF family. As to quaternary structure, heterodimer of HisH and HisF.

The protein localises to the cytoplasm. The enzyme catalyses 5-[(5-phospho-1-deoxy-D-ribulos-1-ylimino)methylamino]-1-(5-phospho-beta-D-ribosyl)imidazole-4-carboxamide + L-glutamine = D-erythro-1-(imidazol-4-yl)glycerol 3-phosphate + 5-amino-1-(5-phospho-beta-D-ribosyl)imidazole-4-carboxamide + L-glutamate + H(+). The protein operates within amino-acid biosynthesis; L-histidine biosynthesis; L-histidine from 5-phospho-alpha-D-ribose 1-diphosphate: step 5/9. In terms of biological role, IGPS catalyzes the conversion of PRFAR and glutamine to IGP, AICAR and glutamate. The HisF subunit catalyzes the cyclization activity that produces IGP and AICAR from PRFAR using the ammonia provided by the HisH subunit. The polypeptide is Imidazole glycerol phosphate synthase subunit HisF (Desulfovibrio desulfuricans (strain ATCC 27774 / DSM 6949 / MB)).